The primary structure comprises 264 residues: DNA repair protein RecO (264 aa).

This sequence belongs to the RecO family.

Involved in DNA repair and RecF pathway recombination. The sequence is that of DNA repair protein RecO from Leuconostoc citreum (strain KM20).